We begin with the raw amino-acid sequence, 1043 residues long: Protein translocase subunit SecA (1043 aa).

Residues Gln143, 161–165 (GEGKT), and Asp665 each bind ATP. Low complexity predominate over residues 980–1005 (ATAAPAAETTTTAKAADAARQQPPAA). The segment at 980 to 1043 (ATAAPAAETT…KYKHCHGRNA (64 aa)) is disordered. Basic and acidic residues predominate over residues 1008-1022 (EEQKRQPVHVEKTPG). Zn(2+) is bound by residues Cys1027, Cys1029, Cys1038, and His1039. The span at 1033-1043 (KKYKHCHGRNA) shows a compositional bias: basic residues.

It belongs to the SecA family. As to quaternary structure, monomer and homodimer. Part of the essential Sec protein translocation apparatus which comprises SecA, SecYEG and auxiliary proteins SecDF. Other proteins may also be involved. Requires Zn(2+) as cofactor.

The protein localises to the cell inner membrane. It localises to the cytoplasm. The catalysed reaction is ATP + H2O + cellular proteinSide 1 = ADP + phosphate + cellular proteinSide 2.. In terms of biological role, part of the Sec protein translocase complex. Interacts with the SecYEG preprotein conducting channel. Has a central role in coupling the hydrolysis of ATP to the transfer of proteins into and across the cell membrane, serving as an ATP-driven molecular motor driving the stepwise translocation of polypeptide chains across the membrane. This Chloroherpeton thalassium (strain ATCC 35110 / GB-78) protein is Protein translocase subunit SecA.